We begin with the raw amino-acid sequence, 142 residues long: Galactose-6-phosphate isomerase subunit LacA (142 aa).

Belongs to the LacAB/RpiB family. Heteromultimeric protein consisting of LacA and LacB.

It carries out the reaction aldehydo-D-galactose 6-phosphate = keto-D-tagatose 6-phosphate. It participates in carbohydrate metabolism; D-galactose 6-phosphate degradation; D-tagatose 6-phosphate from D-galactose 6-phosphate: step 1/1. The sequence is that of Galactose-6-phosphate isomerase subunit LacA from Staphylococcus aureus.